Here is a 322-residue protein sequence, read N- to C-terminus: Replication factor C small subunit (322 aa).

An ATP-binding site is contributed by 45–52 (GPPGVGKT).

It belongs to the activator 1 small subunits family. RfcS subfamily. In terms of assembly, heteromultimer composed of small subunits (RfcS) and large subunits (RfcL).

Functionally, part of the RFC clamp loader complex which loads the PCNA sliding clamp onto DNA. In Methanocella arvoryzae (strain DSM 22066 / NBRC 105507 / MRE50), this protein is Replication factor C small subunit.